Here is a 462-residue protein sequence, read N- to C-terminus: MPTTVTEFDTITAISTPPGEGAISIVRLSGDDSLAIIKRVYRGKDLDKVASHTINYGHIIDPKTDAVVDEVMVSVMRAPKTFTREDVIEINCHGGIVATNRILQLLMSYGARMAEPGEFTKRAFLNGRIDLTQAESVMDLIRAKTDRAMQVAVDQLDGSLTHLIKNLRQEILEVLAQVEVNIDYPEYDTDEMTTRILLEKAELVKGRIGELLQTAQQGKVLREGLATAIVGRPNVGKSSLLNHLLHEDKAIVTDVAGTTRDVLEEYVNVRGVPLKLVDTAGIHDTEDKVEKIGVERSRAAITKADLILLVLNQSEPLTIEDRELITATTDKKRIIILNKTDLPNQLDLDELQTLVRADEVIQTSILTSEGVTDLEAQIAKLFFGGIENSQSTVMITNARQIGLLNQAQQSLDEVISGIAAGMPVDLVQIDMTNCWDKLGEITGDSAPDELITELFSQFCLGK.

Arginine 27, glutamate 89, and arginine 128 together coordinate (6S)-5-formyl-5,6,7,8-tetrahydrofolate. The region spanning 224–383 (GLATAIVGRP…LEAQIAKLFF (160 aa)) is the TrmE-type G domain. Asparagine 234 serves as a coordination point for K(+). Residues 234–239 (NVGKSS), 253–259 (TDVAGTT), and 278–281 (DTAG) contribute to the GTP site. Serine 238 contacts Mg(2+). K(+) is bound by residues threonine 253, valine 255, and threonine 258. Threonine 259 is a Mg(2+) binding site. Lysine 462 lines the (6S)-5-formyl-5,6,7,8-tetrahydrofolate pocket.

It belongs to the TRAFAC class TrmE-Era-EngA-EngB-Septin-like GTPase superfamily. TrmE GTPase family. Homodimer. Heterotetramer of two MnmE and two MnmG subunits. The cofactor is K(+).

Its subcellular location is the cytoplasm. In terms of biological role, exhibits a very high intrinsic GTPase hydrolysis rate. Involved in the addition of a carboxymethylaminomethyl (cmnm) group at the wobble position (U34) of certain tRNAs, forming tRNA-cmnm(5)s(2)U34. The polypeptide is tRNA modification GTPase MnmE (Latilactobacillus sakei subsp. sakei (strain 23K) (Lactobacillus sakei subsp. sakei)).